The following is a 1076-amino-acid chain: Regulator of G-protein signaling protein-like (1076 aa).

Residues 645 to 764 enclose the RGS domain; the sequence is NLTEVLLNTQ…LFPPHHQEVE (120 aa). A compositionally biased stretch (polar residues) spans 834–852; sequence TTAHNTSGRSAPPSTNVRS. The disordered stretch occupies residues 834 to 854; the sequence is TTAHNTSGRSAPPSTNVRSAD. The helical transmembrane segment at 960 to 982 threads the bilayer; sequence VFHGAIMSVFPVVMYFWKRFCFW.

It is found in the membrane. The protein is Regulator of G-protein signaling protein-like (RGSL1) of Homo sapiens (Human).